The chain runs to 1157 residues: Voltage-dependent calcium channel subunit alpha-2/delta-2 (1157 aa).

The signal sequence occupies residues Met1–Thr18. The interval Met1–Ala37 is disordered. The Extracellular portion of the chain corresponds to Ala19 to Gly1119. A compositionally biased stretch (pro residues) spans Gly24–Arg34. Asn205 is a glycosylation site (N-linked (GlcNAc...) asparagine). Residues Asp294–Leu472 enclose the VWFA domain. Residues Asp300, Ser302, and Ser304 each contribute to the a divalent metal cation site. The MIDAS-like motif motif lies at Asp300–Ser304. N-linked (GlcNAc...) asparagine glycosylation is found at Asn389, Asn421, Asn510, Asn543, Asn627, and Asn864. A disulfide bond links Cys446 and Cys1104. The Cache domain maps to Trp488–Pro577. The helical transmembrane segment at Ala1120–Leu1140 threads the bilayer. The Cytoplasmic segment spans residues Pro1141–Leu1157.

It belongs to the calcium channel subunit alpha-2/delta family. In terms of assembly, dimer formed of alpha-2-2 and delta-2 chains; disulfide-linked. Voltage-dependent calcium channels are multisubunit complexes, consisting of alpha-1 (CACNA1), alpha-2 (CACNA2D), beta (CACNB) and delta (CACNA2D) subunits in a 1:1:1:1 ratio. N-glycosylated. In terms of processing, may be proteolytically processed into subunits alpha-2-2 and delta-2 that are disulfide-linked. It is however unclear whether such cleavage really takes place in vivo and has a functional role. As to expression, in heart, it is highly expressed in atrium and at lower level in ventricle.

The protein localises to the membrane. In terms of biological role, the alpha-2/delta subunit of voltage-dependent calcium channels regulates calcium current density and activation/inactivation kinetics of the calcium channel. Acts as a regulatory subunit for P/Q-type calcium channel (CACNA1A), N-type (CACNA1B), L-type (CACNA1C OR CACNA1D) and possibly T-type (CACNA1G). Overexpression induces apoptosis. The protein is Voltage-dependent calcium channel subunit alpha-2/delta-2 (Cacna2d2) of Rattus norvegicus (Rat).